Consider the following 104-residue polypeptide: Large ribosomal subunit protein eL42 (104 aa).

Residues lysine 22 to leucine 56 form a disordered region.

This sequence belongs to the eukaryotic ribosomal protein eL42 family.

The sequence is that of Large ribosomal subunit protein eL42 (RPL44) from Encephalitozoon cuniculi (strain GB-M1) (Microsporidian parasite).